The following is a 395-amino-acid chain: Trans-2-enoyl-CoA reductase [NADH] (395 aa).

NAD(+)-binding positions include 47-52, 73-74, 110-111, and 138-139; these read GASTGY, FE, DA, and LA. Tyrosine 224 contributes to the substrate binding site. The active-site Proton donor is the tyrosine 234. NAD(+)-binding positions include lysine 243 and 272–274; that span reads VVT.

The protein belongs to the TER reductase family. As to quaternary structure, monomer.

It catalyses the reaction a 2,3-saturated acyl-CoA + NAD(+) = a (2E)-enoyl-CoA + NADH + H(+). The protein operates within lipid metabolism; fatty acid biosynthesis. Functionally, involved in the fatty acid synthesis (FAS II). Catalyzes the reduction of a carbon-carbon double bond in an enoyl moiety that is covalently linked to a coenzyme A (CoA). This is Trans-2-enoyl-CoA reductase [NADH] from Ruminiclostridium cellulolyticum (strain ATCC 35319 / DSM 5812 / JCM 6584 / H10) (Clostridium cellulolyticum).